A 513-amino-acid polypeptide reads, in one-letter code: MGAAAKLAFAVFLISCSSGAILGRSETQECIFYNANWERDRTNRTGVESCYGDKDKRRHCFATWKNISSSIDIVKQGCWLDDINCYDRTDCIEKKDSPEVYFCCCEGNMCNERFSYFPEMEVTQPTSNPVTPKPPYYNILLYSLVPLMLVAGIVICAFWVYRHHKMAYPPVLVPTQDPGPPPPSPLLGLKPLQLLEVKARGGFGCVWKAQLLNEYVAVKIFPIQDKQSWQNEYEVYSLPGMKHENILQFIGAEKRGTSVDVDLWLITAFHEKGSLSDFLKANVVSWNELCHIAETMARGLAYLHEDIPGLKDGHKPAISHRDIKSKNVLLKNNLTACIADFGLALKFEAGKSAGDTHGQVGTRRYMAPEVLEGAINFQRDAFLRIDMYAMGLVLWELASRCTAADGPVDEYMLPFVEEIGQHPSLEDMQEVVVHKKKRPVLRDYWQKLAGMAMLCETIEECWDHDAEARLSAGCVGERITQMQRLTNIITTEDIVTVVTVVTNVDFPPKESSL.

A signal peptide spans 1–19; that stretch reads MGAAAKLAFAVFLISCSSG. Over 20–135 the chain is Extracellular; the sequence is AILGRSETQE…TSNPVTPKPP (116 aa). Disulfide bonds link Cys-30-Cys-60, Cys-50-Cys-78, Cys-85-Cys-104, Cys-91-Cys-103, and Cys-105-Cys-110. N-linked (GlcNAc...) asparagine glycans are attached at residues Asn-43 and Asn-66. Residues 136–161 traverse the membrane as a helical segment; the sequence is YYNILLYSLVPLMLVAGIVICAFWVY. Topologically, residues 162–513 are cytoplasmic; that stretch reads RHHKMAYPPV…VDFPPKESSL (352 aa). One can recognise a Protein kinase domain in the interval 192–485; it reads LQLLEVKARG…GERITQMQRL (294 aa). ATP contacts are provided by residues 198–206 and Lys-219; that span reads KARGGFGCV. Catalysis depends on Asp-322, which acts as the Proton acceptor.

The protein belongs to the protein kinase superfamily. TKL Ser/Thr protein kinase family. TGFB receptor subfamily. Part of a complex consisting of MAGI2/ARIP1, ACVR2A, ACVR1B and SMAD3. Interacts with MAGI2/ARIP1. Interacts with type I receptor ACVR1. Interacts with TSC22D1/TSC-22. Interacts with activin A/INHBA. Mg(2+) is required as a cofactor. Requires Mn(2+) as cofactor.

It is found in the cell membrane. It carries out the reaction L-threonyl-[receptor-protein] + ATP = O-phospho-L-threonyl-[receptor-protein] + ADP + H(+). The enzyme catalyses L-seryl-[receptor-protein] + ATP = O-phospho-L-seryl-[receptor-protein] + ADP + H(+). Functionally, on ligand binding, forms a receptor complex consisting of two type II and two type I transmembrane serine/threonine kinases. Type II receptors phosphorylate and activate type I receptors which autophosphorylate, then bind and activate SMAD transcriptional regulators. Receptor for activin A, activin B and inhibin A. Mediates induction of adipogenesis by GDF6. This Ovis aries (Sheep) protein is Activin receptor type-2A (ACVR2A).